The following is a 446-amino-acid chain: Fatty acid desaturase 2 (446 aa).

Topologically, residues 1-132 (MGMGGQSGEG…EDMRLFKSNP (132 aa)) are cytoplasmic. In terms of domain architecture, Cytochrome b5 heme-binding spans 20–97 (EAQYSWEEIQ…LKPLYIGELA (78 aa)). Residues 133 to 153 (AFFIFYLFHILLIEFLAWCTL) traverse the membrane as a helical segment. Position 154 (His154) is a topological domain, lumenal. Residues 155–175 (YLGTGWIPAIITVLLLTISQA) form a helical membrane-spanning segment. Topologically, residues 176–265 (QAGWLQHDFG…IKYLPYNHQH (90 aa)) are cytoplasmic. Residues 182–186 (HDFGH) carry the Histidine box-1 motif. The Histidine box-2 motif lies at 219 to 223 (HFQHH). The helical transmembrane segment at 266–286 (LYFFLIGPPLLIPVYFTVQII) threads the bilayer. Residues 287–307 (KTMIARKDWVDLAWSVSYYVR) are Lumenal-facing. Residues 308 to 328 (FFFTFVPFFGVLGSLALLNAV) form a helical membrane-spanning segment. At 329 to 446 (RFFESHWFVW…QLWLDAYLHK (118 aa)) the chain is on the cytoplasmic side. Residues 384 to 388 (QIEHH) carry the Histidine box-3 motif.

Belongs to the fatty acid desaturase type 1 family.

The protein localises to the endoplasmic reticulum membrane. The protein operates within lipid metabolism; polyunsaturated fatty acid biosynthesis. Functionally, component of a lipid metabolic pathway that catalyzes biosynthesis of highly unsaturated fatty acids (HUFA) from precursor essential polyunsaturated fatty acids (PUFA) linoleic acid (LA) (18:2n-6) and alpha-linolenic acid (ALA) (18:3n-3). Catalyzes the first and rate limiting step in this pathway which is the desaturation of LA (18:2n-6) and ALA (18:3n-3) into gamma-linoleic acid (GLA) (18:3n-6) and stearidonic acid (18:4n-3) respectively and other desaturation steps. Highly unsaturated fatty acids (HUFA) play pivotal roles in many biological functions. This Xenopus laevis (African clawed frog) protein is Fatty acid desaturase 2 (fads2).